The sequence spans 238 residues: Acyl-protein thioesterase 1 (238 aa).

Active-site charge relay system residues include Ser-120, Asp-174, and His-219.

The protein belongs to the AB hydrolase superfamily. AB hydrolase 2 family.

It is found in the cytoplasm. The protein localises to the nucleus. It carries out the reaction S-hexadecanoyl-L-cysteinyl-[protein] + H2O = L-cysteinyl-[protein] + hexadecanoate + H(+). In terms of biological role, hydrolyzes fatty acids from S-acylated cysteine residues in proteins with a strong preference for palmitoylated G-alpha proteins over other acyl substrates. Mediates the deacylation of G-alpha proteins such as GPA1 in vivo, but has weak or no activity toward palmitoylated Ras proteins. Has weak lysophospholipase activity in vitro; however such activity may not exist in vivo. The chain is Acyl-protein thioesterase 1 from Cryptococcus neoformans var. neoformans serotype D (strain B-3501A) (Filobasidiella neoformans).